The following is a 103-amino-acid chain: Large ribosomal subunit protein uL24 (103 aa).

Belongs to the universal ribosomal protein uL24 family. As to quaternary structure, part of the 50S ribosomal subunit.

One of two assembly initiator proteins, it binds directly to the 5'-end of the 23S rRNA, where it nucleates assembly of the 50S subunit. Its function is as follows. One of the proteins that surrounds the polypeptide exit tunnel on the outside of the subunit. The sequence is that of Large ribosomal subunit protein uL24 from Pasteurella multocida (strain Pm70).